Here is a 143-residue protein sequence, read N- to C-terminus: Anti-sigma F factor (143 aa).

The protein belongs to the anti-sigma-factor family.

It carries out the reaction L-seryl-[protein] + ATP = O-phospho-L-seryl-[protein] + ADP + H(+). The enzyme catalyses L-threonyl-[protein] + ATP = O-phospho-L-threonyl-[protein] + ADP + H(+). In terms of biological role, binds to sigma F and blocks its ability to form an RNA polymerase holoenzyme (E-sigma F). Phosphorylates SpoIIAA on a serine residue. This phosphorylation may enable SpoIIAA to act as an anti-anti-sigma factor that counteracts SpoIIAB and thus releases sigma F from inhibition. The protein is Anti-sigma F factor of Clostridium acetobutylicum (strain ATCC 824 / DSM 792 / JCM 1419 / IAM 19013 / LMG 5710 / NBRC 13948 / NRRL B-527 / VKM B-1787 / 2291 / W).